A 127-amino-acid polypeptide reads, in one-letter code: Glycine cleavage system H protein (127 aa).

Positions 22–104 constitute a Lipoyl-binding domain; that stretch reads KVRIGITDFA…YEKAWMIVIE (83 aa). At K63 the chain carries N6-lipoyllysine.

This sequence belongs to the GcvH family. In terms of assembly, the glycine cleavage system is composed of four proteins: P, T, L and H. (R)-lipoate serves as cofactor.

The glycine cleavage system catalyzes the degradation of glycine. The H protein shuttles the methylamine group of glycine from the P protein to the T protein. Its function is as follows. Is also involved in protein lipoylation via its role as an octanoyl/lipoyl carrier protein intermediate. The polypeptide is Glycine cleavage system H protein (Geobacillus thermodenitrificans (strain NG80-2)).